Consider the following 325-residue polypeptide: 5-dehydro-2-deoxygluconokinase (325 aa).

It belongs to the carbohydrate kinase PfkB family.

The enzyme catalyses 5-dehydro-2-deoxy-D-gluconate + ATP = 6-phospho-5-dehydro-2-deoxy-D-gluconate + ADP + H(+). Its pathway is polyol metabolism; myo-inositol degradation into acetyl-CoA; acetyl-CoA from myo-inositol: step 5/7. Its function is as follows. Catalyzes the phosphorylation of 5-dehydro-2-deoxy-D-gluconate (2-deoxy-5-keto-D-gluconate or DKG) to 6-phospho-5-dehydro-2-deoxy-D-gluconate (DKGP). The chain is 5-dehydro-2-deoxygluconokinase from Listeria monocytogenes serotype 4b (strain CLIP80459).